We begin with the raw amino-acid sequence, 116 residues long: MANEVRVARLESLIKDVINNALANEINDKIAKLARVTAVRLSNDLSVAKIFLDAHKRESMLKVLENVNKVSGLLRSKLAAEWTSYKVPELRFVIDETIDYANHIDELFKKIKQQEN.

It belongs to the RbfA family. As to quaternary structure, monomer. Binds 30S ribosomal subunits, but not 50S ribosomal subunits or 70S ribosomes.

It is found in the cytoplasm. In terms of biological role, one of several proteins that assist in the late maturation steps of the functional core of the 30S ribosomal subunit. Associates with free 30S ribosomal subunits (but not with 30S subunits that are part of 70S ribosomes or polysomes). Required for efficient processing of 16S rRNA. May interact with the 5'-terminal helix region of 16S rRNA. This Ureaplasma parvum serovar 3 (strain ATCC 27815 / 27 / NCTC 11736) protein is Ribosome-binding factor A.